The chain runs to 281 residues: Ribosomal RNA small subunit methyltransferase I (281 aa).

The protein belongs to the methyltransferase superfamily. RsmI family.

It localises to the cytoplasm. The enzyme catalyses cytidine(1402) in 16S rRNA + S-adenosyl-L-methionine = 2'-O-methylcytidine(1402) in 16S rRNA + S-adenosyl-L-homocysteine + H(+). Functionally, catalyzes the 2'-O-methylation of the ribose of cytidine 1402 (C1402) in 16S rRNA. This is Ribosomal RNA small subunit methyltransferase I from Erythrobacter litoralis (strain HTCC2594).